Reading from the N-terminus, the 485-residue chain is Aspartyl/glutamyl-tRNA(Asn/Gln) amidotransferase subunit B (485 aa).

Belongs to the GatB/GatE family. GatB subfamily. Heterotrimer of A, B and C subunits.

It catalyses the reaction L-glutamyl-tRNA(Gln) + L-glutamine + ATP + H2O = L-glutaminyl-tRNA(Gln) + L-glutamate + ADP + phosphate + H(+). The catalysed reaction is L-aspartyl-tRNA(Asn) + L-glutamine + ATP + H2O = L-asparaginyl-tRNA(Asn) + L-glutamate + ADP + phosphate + 2 H(+). Functionally, allows the formation of correctly charged Asn-tRNA(Asn) or Gln-tRNA(Gln) through the transamidation of misacylated Asp-tRNA(Asn) or Glu-tRNA(Gln) in organisms which lack either or both of asparaginyl-tRNA or glutaminyl-tRNA synthetases. The reaction takes place in the presence of glutamine and ATP through an activated phospho-Asp-tRNA(Asn) or phospho-Glu-tRNA(Gln). This is Aspartyl/glutamyl-tRNA(Asn/Gln) amidotransferase subunit B from Ruminiclostridium cellulolyticum (strain ATCC 35319 / DSM 5812 / JCM 6584 / H10) (Clostridium cellulolyticum).